Here is a 212-residue protein sequence, read N- to C-terminus: Large ribosomal subunit protein uL3 (212 aa).

Positions 130–155 (KRGNMTHGSKNHRLPGSTGAGTTPGR) are disordered.

It belongs to the universal ribosomal protein uL3 family. In terms of assembly, part of the 50S ribosomal subunit. Forms a cluster with proteins L14 and L19.

Functionally, one of the primary rRNA binding proteins, it binds directly near the 3'-end of the 23S rRNA, where it nucleates assembly of the 50S subunit. The sequence is that of Large ribosomal subunit protein uL3 from Rippkaea orientalis (strain PCC 8801 / RF-1) (Cyanothece sp. (strain PCC 8801)).